We begin with the raw amino-acid sequence, 191 residues long: Small ribosomal subunit protein uS7 (191 aa).

The tract at residues 56 to 80 (NKSGEQGDGDGESGGKAGGIKKRSL) is disordered.

The protein belongs to the universal ribosomal protein uS7 family. As to quaternary structure, part of the 30S ribosomal subunit. Contacts proteins S9 and S11.

Functionally, one of the primary rRNA binding proteins, it binds directly to 16S rRNA where it nucleates assembly of the head domain of the 30S subunit. Is located at the subunit interface close to the decoding center, probably blocks exit of the E-site tRNA. This is Small ribosomal subunit protein uS7 from Coxiella burnetii (strain CbuK_Q154) (Coxiella burnetii (strain Q154)).